A 156-amino-acid polypeptide reads, in one-letter code: Snaclec trimecetin subunit alpha (156 aa).

Positions methionine 1–alanine 23 are cleaved as a signal peptide. 3 disulfide bridges follow: cysteine 25–cysteine 36, cysteine 53–cysteine 150, and cysteine 125–cysteine 142. Residues phenylalanine 32 to lysine 151 enclose the C-type lectin domain.

It belongs to the snaclec family. As to quaternary structure, heterodimer of subunits alpha and beta; disulfide-linked. In terms of tissue distribution, expressed by the venom gland.

It localises to the secreted. Its function is as follows. Snaclec that induces platelet aggregation in either human platelet rich plasma (PRP) or washed platelet suspensions. It causes aggregation in a dose-dependent manner even in the absence of various platelet agonists such as ADP or von Willebrand factor (vWF). Interestingly, it does not induce aggregation in rabbit PRP. A monoclonal antibody against the platelet GPIb receptor blocks the aggregation induced by trimecetin, suggesting that it acts by binding to GPIb (GP1BA/GP1BB). This chain is Snaclec trimecetin subunit alpha, found in Protobothrops mucrosquamatus (Taiwan habu).